An 860-amino-acid chain; its full sequence is Leucine--tRNA ligase (860 aa).

A 'HIGH' region motif is present at residues 42 to 52 (PYPSGRLHMGH). The short motif at 619-623 (KMSKS) is the 'KMSKS' region element. Lysine 622 serves as a coordination point for ATP.

This sequence belongs to the class-I aminoacyl-tRNA synthetase family.

It localises to the cytoplasm. The catalysed reaction is tRNA(Leu) + L-leucine + ATP = L-leucyl-tRNA(Leu) + AMP + diphosphate. The protein is Leucine--tRNA ligase of Mannheimia succiniciproducens (strain KCTC 0769BP / MBEL55E).